Here is a 416-residue protein sequence, read N- to C-terminus: D-amino acid dehydrogenase (416 aa).

3–17 (VVILGAGVIGVTSAW) lines the FAD pocket.

This sequence belongs to the DadA oxidoreductase family. The cofactor is FAD.

The enzyme catalyses a D-alpha-amino acid + A + H2O = a 2-oxocarboxylate + AH2 + NH4(+). It functions in the pathway amino-acid degradation; D-alanine degradation; NH(3) and pyruvate from D-alanine: step 1/1. Functionally, oxidative deamination of D-amino acids. The sequence is that of D-amino acid dehydrogenase from Rhizorhabdus wittichii (strain DSM 6014 / CCUG 31198 / JCM 15750 / NBRC 105917 / EY 4224 / RW1) (Sphingomonas wittichii).